Here is a 157-residue protein sequence, read N- to C-terminus: Phosphopantetheine adenylyltransferase (157 aa).

A substrate-binding site is contributed by Thr-8. ATP-binding positions include 8-9 (TF) and His-16. 3 residues coordinate substrate: Lys-40, Thr-72, and Arg-86. ATP is bound by residues 87 to 89 (GLR), Glu-97, and 122 to 128 (YSFLSSS).

This sequence belongs to the bacterial CoaD family. Homohexamer. It depends on Mg(2+) as a cofactor.

Its subcellular location is the cytoplasm. The enzyme catalyses (R)-4'-phosphopantetheine + ATP + H(+) = 3'-dephospho-CoA + diphosphate. Its pathway is cofactor biosynthesis; coenzyme A biosynthesis; CoA from (R)-pantothenate: step 4/5. Reversibly transfers an adenylyl group from ATP to 4'-phosphopantetheine, yielding dephospho-CoA (dPCoA) and pyrophosphate. The polypeptide is Phosphopantetheine adenylyltransferase (Prochlorococcus marinus (strain MIT 9215)).